The chain runs to 234 residues: Peptidase E (234 aa).

Catalysis depends on charge relay system residues Ser123, Asp138, and His160.

The protein belongs to the peptidase S51 family.

It is found in the cytoplasm. It catalyses the reaction Dipeptidase E catalyzes the hydrolysis of dipeptides Asp-|-Xaa. It does not act on peptides with N-terminal Glu, Asn or Gln, nor does it cleave isoaspartyl peptides.. Functionally, hydrolyzes dipeptides containing N-terminal aspartate residues. May play a role in allowing the cell to use peptide aspartate to spare carbon otherwise required for the synthesis of the aspartate family of amino acids. The chain is Peptidase E from Actinobacillus pleuropneumoniae serotype 5b (strain L20).